Consider the following 285-residue polypeptide: UPF0354 protein SH1179 (285 aa).

The protein belongs to the UPF0354 family.

The protein is UPF0354 protein SH1179 of Staphylococcus haemolyticus (strain JCSC1435).